Reading from the N-terminus, the 496-residue chain is MTATALAQRDFTAVIGLEVHVQLETDTKIFCGCSTRDNNAEPNTRTCPVCLGLPGALPVLNKAAVEAAVKVGKALNADIAEKTQFHRKNYYYPDLPKNFQISQYDAPICSDGQLSISVEDNRREVAIRRAHLEEDPGSLTHQGGNIDTAEYTLVDYNRAGTPLMEIVTEPDFRSPAETRAFLNKLEEVLEYLGIFDPTADGSLRVDANISLIPTEDIDNGSITTAALESANRTEVKNISSHKGAEKALAYEVTRQRNAVERGRAIEQETRHWDESRGITVSMRSKEAEKDYRYFPEADLPPLAVADWKDQISIPELPDARRERFREEYKLDSESAAKLTSTKAVADFFESVADQFDPALAATWVADNLLGELNYRDMTVGDIDDRFDEFTQLIELVDDEDITTKNAEEVVLRRMLDDELTPEAVIESEGLGRADEDEVVTAVTGAIDESPEAVEDYHAGEGGAINFLVGQVMQKTGGSADPSKVNTLLREQLEDKK.

A disordered region spans residues Thr475–Lys496.

This sequence belongs to the GatB/GatE family. GatB subfamily. In terms of assembly, heterotrimer of A, B and C subunits.

The enzyme catalyses L-glutamyl-tRNA(Gln) + L-glutamine + ATP + H2O = L-glutaminyl-tRNA(Gln) + L-glutamate + ADP + phosphate + H(+). The catalysed reaction is L-aspartyl-tRNA(Asn) + L-glutamine + ATP + H2O = L-asparaginyl-tRNA(Asn) + L-glutamate + ADP + phosphate + 2 H(+). Its function is as follows. Allows the formation of correctly charged Asn-tRNA(Asn) or Gln-tRNA(Gln) through the transamidation of misacylated Asp-tRNA(Asn) or Glu-tRNA(Gln) in organisms which lack either or both of asparaginyl-tRNA or glutaminyl-tRNA synthetases. The reaction takes place in the presence of glutamine and ATP through an activated phospho-Asp-tRNA(Asn) or phospho-Glu-tRNA(Gln). This Haloquadratum walsbyi (strain DSM 16790 / HBSQ001) protein is Aspartyl/glutamyl-tRNA(Asn/Gln) amidotransferase subunit B.